Here is a 212-residue protein sequence, read N- to C-terminus: Methylthioribulose-1-phosphate dehydratase (212 aa).

Zn(2+)-binding residues include histidine 97 and histidine 99.

The protein belongs to the aldolase class II family. MtnB subfamily. In terms of assembly, homotetramer. Zn(2+) is required as a cofactor.

It catalyses the reaction 5-(methylsulfanyl)-D-ribulose 1-phosphate = 5-methylsulfanyl-2,3-dioxopentyl phosphate + H2O. It participates in amino-acid biosynthesis; L-methionine biosynthesis via salvage pathway; L-methionine from S-methyl-5-thio-alpha-D-ribose 1-phosphate: step 2/6. Catalyzes the dehydration of methylthioribulose-1-phosphate (MTRu-1-P) into 2,3-diketo-5-methylthiopentyl-1-phosphate (DK-MTP-1-P). The polypeptide is Methylthioribulose-1-phosphate dehydratase (Bacillus cytotoxicus (strain DSM 22905 / CIP 110041 / 391-98 / NVH 391-98)).